Here is a 361-residue protein sequence, read N- to C-terminus: Phospho-N-acetylmuramoyl-pentapeptide-transferase (361 aa).

A run of 10 helical transmembrane segments spans residues 25 to 45 (RGIL…PAVI), 73 to 93 (TMGG…WGDL), 98 to 118 (VWLV…DDWI), 139 to 159 (IFGL…AAIT), 168 to 188 (IALP…IVGF), 200 to 220 (GLAI…AYAS), 237 to 257 (AGEL…FLWF), 264 to 284 (VFMG…IAVI), 289 to 309 (MVLV…MIQV), and 339 to 359 (VIVR…ATLK).

It belongs to the glycosyltransferase 4 family. MraY subfamily. Mg(2+) serves as cofactor.

Its subcellular location is the cell inner membrane. The enzyme catalyses UDP-N-acetyl-alpha-D-muramoyl-L-alanyl-gamma-D-glutamyl-meso-2,6-diaminopimeloyl-D-alanyl-D-alanine + di-trans,octa-cis-undecaprenyl phosphate = di-trans,octa-cis-undecaprenyl diphospho-N-acetyl-alpha-D-muramoyl-L-alanyl-D-glutamyl-meso-2,6-diaminopimeloyl-D-alanyl-D-alanine + UMP. It participates in cell wall biogenesis; peptidoglycan biosynthesis. Functionally, catalyzes the initial step of the lipid cycle reactions in the biosynthesis of the cell wall peptidoglycan: transfers peptidoglycan precursor phospho-MurNAc-pentapeptide from UDP-MurNAc-pentapeptide onto the lipid carrier undecaprenyl phosphate, yielding undecaprenyl-pyrophosphoryl-MurNAc-pentapeptide, known as lipid I. This chain is Phospho-N-acetylmuramoyl-pentapeptide-transferase, found in Xanthomonas axonopodis pv. citri (strain 306).